Here is a 421-residue protein sequence, read N- to C-terminus: Phosphoribosylamine--glycine ligase (421 aa).

The region spanning 108–314 (KEIMVKYNVP…FAQNIDDIMM (207 aa)) is the ATP-grasp domain. Residue 134–195 (IEEQGAPIVV…EEFLDGEEFS (62 aa)) coordinates ATP. Positions 284 and 286 each coordinate Mg(2+).

This sequence belongs to the GARS family. It depends on Mg(2+) as a cofactor. Requires Mn(2+) as cofactor.

It carries out the reaction 5-phospho-beta-D-ribosylamine + glycine + ATP = N(1)-(5-phospho-beta-D-ribosyl)glycinamide + ADP + phosphate + H(+). Its pathway is purine metabolism; IMP biosynthesis via de novo pathway; N(1)-(5-phospho-D-ribosyl)glycinamide from 5-phospho-alpha-D-ribose 1-diphosphate: step 2/2. The protein is Phosphoribosylamine--glycine ligase of Streptococcus pyogenes serotype M6 (strain ATCC BAA-946 / MGAS10394).